A 229-amino-acid chain; its full sequence is Large ribosomal subunit protein uL1 (229 aa).

This sequence belongs to the universal ribosomal protein uL1 family. Part of the 50S ribosomal subunit.

In terms of biological role, binds directly to 23S rRNA. The L1 stalk is quite mobile in the ribosome, and is involved in E site tRNA release. Protein L1 is also a translational repressor protein, it controls the translation of the L11 operon by binding to its mRNA. This chain is Large ribosomal subunit protein uL1, found in Clostridium botulinum (strain Alaska E43 / Type E3).